The primary structure comprises 223 residues: Ribonuclease HII (223 aa).

Residues 1–219 (MMIAGIDEAG…VENIREELEK (219 aa)) enclose the RNase H type-2 domain. Positions 7, 8, and 105 each coordinate a divalent metal cation.

It belongs to the RNase HII family. Mn(2+) is required as a cofactor. Requires Mg(2+) as cofactor.

It localises to the cytoplasm. The enzyme catalyses Endonucleolytic cleavage to 5'-phosphomonoester.. In terms of biological role, endonuclease that specifically degrades the RNA of RNA-DNA hybrids. The polypeptide is Ribonuclease HII (Methanosarcina acetivorans (strain ATCC 35395 / DSM 2834 / JCM 12185 / C2A)).